The following is a 1094-amino-acid chain: Probable arabinosyltransferase A (1094 aa).

Helical transmembrane passes span 12 to 34 (IARL…VPLL), 205 to 224 (AVML…LAAL), 247 to 269 (GFAS…VIGA), 322 to 344 (VWMR…RFVL), 356 to 375 (SNRV…WLPF), 408 to 430 (AAVA…IALA), 451 to 470 (GLLA…TVVV), 519 to 536 (FAVL…FVLL), 543 to 565 (GLAS…LLTF), 575 to 597 (GAFA…RIGL), 604 to 626 (TLYV…GWFY), 641 to 663 (IASH…LAAW), and 684 to 706 (ILAS…GSMA).

Belongs to the emb family.

Its subcellular location is the cell membrane. Functionally, arabinosyl transferase responsible for the polymerization of arabinose into the arabinan of arabinogalactan. This chain is Probable arabinosyltransferase A (embA), found in Mycobacterium tuberculosis (strain CDC 1551 / Oshkosh).